Reading from the N-terminus, the 452-residue chain is Trigger factor (452 aa).

Positions 171-256 (GDRVTVSFKG…ATKLEAPQET (86 aa)) constitute a PPIase FKBP-type domain.

This sequence belongs to the FKBP-type PPIase family. Tig subfamily.

It is found in the cytoplasm. It catalyses the reaction [protein]-peptidylproline (omega=180) = [protein]-peptidylproline (omega=0). Functionally, involved in protein export. Acts as a chaperone by maintaining the newly synthesized protein in an open conformation. Functions as a peptidyl-prolyl cis-trans isomerase. This is Trigger factor from Rhodopseudomonas palustris (strain ATCC BAA-98 / CGA009).